The following is a 157-amino-acid chain: 2-C-methyl-D-erythritol 2,4-cyclodiphosphate synthase (157 aa).

Asp8, His10, and His42 together coordinate a divalent metal cation. A 4-CDP-2-C-methyl-D-erythritol 2-phosphate-binding site is contributed by 8–10; sequence DVH. Residues 56–58, 132–135, Phe139, and Arg142 each bind 4-CDP-2-C-methyl-D-erythritol 2-phosphate; these read DIG and STSE.

The protein belongs to the IspF family. As to quaternary structure, homotrimer. A divalent metal cation serves as cofactor.

The enzyme catalyses 4-CDP-2-C-methyl-D-erythritol 2-phosphate = 2-C-methyl-D-erythritol 2,4-cyclic diphosphate + CMP. It participates in isoprenoid biosynthesis; isopentenyl diphosphate biosynthesis via DXP pathway; isopentenyl diphosphate from 1-deoxy-D-xylulose 5-phosphate: step 4/6. In terms of biological role, involved in the biosynthesis of isopentenyl diphosphate (IPP) and dimethylallyl diphosphate (DMAPP), two major building blocks of isoprenoid compounds. Catalyzes the conversion of 4-diphosphocytidyl-2-C-methyl-D-erythritol 2-phosphate (CDP-ME2P) to 2-C-methyl-D-erythritol 2,4-cyclodiphosphate (ME-CPP) with a corresponding release of cytidine 5-monophosphate (CMP). This is 2-C-methyl-D-erythritol 2,4-cyclodiphosphate synthase from Dehalococcoides mccartyi (strain CBDB1).